A 28-amino-acid chain; its full sequence is Caerulein precursor fragment B1 (28 aa).

Belongs to the gastrin/cholecystokinin family. In terms of tissue distribution, expressed by the skin glands.

The protein localises to the secreted. Its function is as follows. Peptide CPF-B1: Has antimicrobial activity against Gram-negative bacteria E.coli ATCC 25922 (MIC=5 uM) and multidrug-resistant A.baumannii (MIC=4-8 uM), against Gram-positive bacteria S.aureus ATCC 25923 (MIC=5 uM) and methicillin-resistant S.aureus and against fungus C.albicans ATCC 90028 (MIC=25 uM). Has some hemolytic activity against human erythrocytes at high concentrations. The polypeptide is Caerulein precursor fragment B1 (Xenopus borealis (Kenyan clawed frog)).